Reading from the N-terminus, the 163-residue chain is NADH-quinone oxidoreductase subunit I (163 aa).

4Fe-4S ferredoxin-type domains lie at 54-84 (LRRY…IDSA) and 94-123 (TRYD…ETHI). 8 residues coordinate [4Fe-4S] cluster: Cys-64, Cys-67, Cys-70, Cys-74, Cys-103, Cys-106, Cys-109, and Cys-113.

The protein belongs to the complex I 23 kDa subunit family. NDH-1 is composed of 14 different subunits. Subunits NuoA, H, J, K, L, M, N constitute the membrane sector of the complex. Requires [4Fe-4S] cluster as cofactor.

It localises to the cell inner membrane. The enzyme catalyses a quinone + NADH + 5 H(+)(in) = a quinol + NAD(+) + 4 H(+)(out). Functionally, NDH-1 shuttles electrons from NADH, via FMN and iron-sulfur (Fe-S) centers, to quinones in the respiratory chain. The immediate electron acceptor for the enzyme in this species is believed to be ubiquinone. Couples the redox reaction to proton translocation (for every two electrons transferred, four hydrogen ions are translocated across the cytoplasmic membrane), and thus conserves the redox energy in a proton gradient. In Xanthomonas oryzae pv. oryzae (strain KACC10331 / KXO85), this protein is NADH-quinone oxidoreductase subunit I.